Reading from the N-terminus, the 357-residue chain is Heme A synthase (357 aa).

The next 5 helical transmembrane spans lie at 24-44, 110-130, 140-160, 175-195, and 209-229; these read LVRY…MVGG, MLAR…WVTG, MLGL…MVAS, IHLT…RGLV, and FAGW…LVAG. Position 272 (histidine 272) interacts with heme. The next 3 membrane-spanning stretches (helical) occupy residues 274-294, 303-323, and 325-345; these read MFAY…WKQV, TIVL…TLLM, and VPLH…AFAV. Histidine 333 provides a ligand contact to heme.

This sequence belongs to the COX15/CtaA family. Type 2 subfamily. In terms of assembly, interacts with CtaB. It depends on heme b as a cofactor.

It is found in the cell membrane. It carries out the reaction Fe(II)-heme o + 2 A + H2O = Fe(II)-heme a + 2 AH2. Its pathway is porphyrin-containing compound metabolism; heme A biosynthesis; heme A from heme O: step 1/1. Functionally, catalyzes the conversion of heme O to heme A by two successive hydroxylations of the methyl group at C8. The first hydroxylation forms heme I, the second hydroxylation results in an unstable dihydroxymethyl group, which spontaneously dehydrates, resulting in the formyl group of heme A. The chain is Heme A synthase from Brucella anthropi (strain ATCC 49188 / DSM 6882 / CCUG 24695 / JCM 21032 / LMG 3331 / NBRC 15819 / NCTC 12168 / Alc 37) (Ochrobactrum anthropi).